The primary structure comprises 478 residues: GTPase Obg (478 aa).

In terms of domain architecture, Obg spans 2-159 (TTFVDRVELH…QDIHLELKTV (158 aa)). Positions 60-88 (YHHSPHRKATNGKPGEGGNRSGKDGQDLV) are disordered. The 171-residue stretch at 160–330 (ADVALVGYPS…LSFALAELVA (171 aa)) folds into the OBG-type G domain. GTP is bound by residues 166–173 (GYPSAGKS), 191–195 (FTTLV), 212–215 (DVPG), 282–285 (NKID), and 311–313 (SAV). Mg(2+) contacts are provided by Ser-173 and Thr-193. An OCT domain is found at 348–430 (PKAVDDAGFT…DNAVVFDWEP (83 aa)). Residues 438 to 478 (MLGRRGEDHRFEAPRPAAQRRRDRDAERDEAQQEFDGFEPF) form a disordered region. 2 stretches are compositionally biased toward basic and acidic residues: residues 439–450 (LGRRGEDHRFEA) and 457–468 (RRRDRDAERDEA). Residues 469 to 478 (QQEFDGFEPF) show a composition bias toward acidic residues.

Belongs to the TRAFAC class OBG-HflX-like GTPase superfamily. OBG GTPase family. As to quaternary structure, monomer. It depends on Mg(2+) as a cofactor.

Its subcellular location is the cytoplasm. The protein resides in the cell membrane. In terms of biological role, plays an unknown essential role and a regulatory role in sporulation. Overexpression suppresses sporulation although cell growth rate was not reduced. Impaired differentiation was eliminated by addition of decoyinine, an inhibitor of GMP synthesis. Overexpression has no effect on undecylprodigiosin production, but decreases actinorhodin production. Its function is as follows. An essential GTPase which binds GTP, GDP and possibly (p)ppGpp with moderate affinity, with high nucleotide exchange rates and a fairly low GTP hydrolysis rate. Plays a role in control of the cell cycle, stress response, ribosome biogenesis and in those bacteria that undergo differentiation, in morphogenesis control. This chain is GTPase Obg, found in Streptomyces coelicolor (strain ATCC BAA-471 / A3(2) / M145).